The primary structure comprises 785 residues: Leucyl aminopeptidase (785 aa).

Residues E106 and 238 to 242 each bind substrate; that span reads GAMEN. H273 is a binding site for Zn(2+). The active-site Proton acceptor is E274. Residues H277 and E296 each contribute to the Zn(2+) site.

Belongs to the peptidase M1 family. As to quaternary structure, co-immunoprecipitates with the 60 kDa chaperonin. Zn(2+) is required as a cofactor. In terms of processing, can be phosphorylated by cell extracts.

It localises to the cytoplasm. The catalysed reaction is Release of an N-terminal amino acid, Xaa-|-Yaa-, in which Xaa is preferably Leu, but may be other amino acids including Pro although not Arg or Lys, and Yaa may be Pro. Amino acid amides and methyl esters are also readily hydrolyzed, but rates on arylamides are exceedingly low.. Its function is as follows. Preferentially acts as a leucyl-aminopeptidase, although it also has activity against other substrates. This Saccharolobus solfataricus (strain ATCC 35092 / DSM 1617 / JCM 11322 / P2) (Sulfolobus solfataricus) protein is Leucyl aminopeptidase (ape2).